A 603-amino-acid polypeptide reads, in one-letter code: Adenine deaminase 1 (603 aa).

The protein belongs to the metallo-dependent hydrolases superfamily. Adenine deaminase family. The cofactor is Mn(2+).

The catalysed reaction is adenine + H2O + H(+) = hypoxanthine + NH4(+). The polypeptide is Adenine deaminase 1 (Carboxydothermus hydrogenoformans (strain ATCC BAA-161 / DSM 6008 / Z-2901)).